The sequence spans 400 residues: MKVLVINCGSSSLKYQLIDMSNEESLAQGLVERIGITGSILTQKVEGKDKYVVETPLKDHQDAIELVLKCLVDENHGVISSMDEISAVGHRVVHGGEKYATSVVINEEVIKALDEFTKLAPLHNPPNIIGINACKALMPKTPMVAVFDTAFHQTMPEKAFMYALPYELYTEDHVRRYGFHGTSHKYVAGEMAKLMNKDISDLKIVTCHIGNGVSITAVDGGKSVDTTMGFTPLDGIIMGSRSGSIDPAIVTYLVKEKGYSIDEVNDILNKKSGVLGISGIGTDFRDIRSAVENDNDPRALLTMDIFGYQVKKQIGAYAAVMGGVDAIVFTAGIGEHAPEIRSRALTNMEFLGIEVDLEKNESHNIGDGMEISKETSKVKVVVIPTNEELMIAKETLELVK.

Mg(2+) is bound at residue Asn7. Lys14 provides a ligand contact to ATP. Arg91 contacts substrate. Asp148 (proton donor/acceptor) is an active-site residue. ATP is bound by residues 208-212 (HIGNG), 283-285 (DFR), and 332-336 (GIGEH). Glu387 is a binding site for Mg(2+).

Belongs to the acetokinase family. In terms of assembly, homodimer. Mg(2+) serves as cofactor. Mn(2+) is required as a cofactor.

The protein localises to the cytoplasm. The catalysed reaction is acetate + ATP = acetyl phosphate + ADP. It functions in the pathway metabolic intermediate biosynthesis; acetyl-CoA biosynthesis; acetyl-CoA from acetate: step 1/2. Functionally, catalyzes the formation of acetyl phosphate from acetate and ATP. Can also catalyze the reverse reaction. This chain is Acetate kinase, found in Clostridium beijerinckii (strain ATCC 51743 / NCIMB 8052) (Clostridium acetobutylicum).